A 671-amino-acid polypeptide reads, in one-letter code: DNA ligase (671 aa).

Residues 32–36 (DAEYD), 81–82 (SL), and Glu113 each bind NAD(+). The active-site N6-AMP-lysine intermediate is Lys115. NAD(+) is bound by residues Arg136, Glu173, Lys290, and Lys314. Cys408, Cys411, Cys426, and Cys432 together coordinate Zn(2+). Residues 593–671 (EIDSPFAGKT…ETEMLRLLGS (79 aa)) enclose the BRCT domain.

It belongs to the NAD-dependent DNA ligase family. LigA subfamily. It depends on Mg(2+) as a cofactor. The cofactor is Mn(2+).

It carries out the reaction NAD(+) + (deoxyribonucleotide)n-3'-hydroxyl + 5'-phospho-(deoxyribonucleotide)m = (deoxyribonucleotide)n+m + AMP + beta-nicotinamide D-nucleotide.. Its function is as follows. DNA ligase that catalyzes the formation of phosphodiester linkages between 5'-phosphoryl and 3'-hydroxyl groups in double-stranded DNA using NAD as a coenzyme and as the energy source for the reaction. It is essential for DNA replication and repair of damaged DNA. The sequence is that of DNA ligase from Escherichia fergusonii (strain ATCC 35469 / DSM 13698 / CCUG 18766 / IAM 14443 / JCM 21226 / LMG 7866 / NBRC 102419 / NCTC 12128 / CDC 0568-73).